The primary structure comprises 363 residues: Chorismate synthase (363 aa).

Positions 44-63 (DLDRRKPGTSRHTTQRQEPD) are disordered. The NADP(+) site is built by R48 and R54. FMN-binding positions include 125 to 127 (RSS), 237 to 238 (NA), G277, 292 to 296 (KPTSS), and R318.

This sequence belongs to the chorismate synthase family. As to quaternary structure, homotetramer. The cofactor is FMNH2.

It catalyses the reaction 5-O-(1-carboxyvinyl)-3-phosphoshikimate = chorismate + phosphate. Its pathway is metabolic intermediate biosynthesis; chorismate biosynthesis; chorismate from D-erythrose 4-phosphate and phosphoenolpyruvate: step 7/7. In terms of biological role, catalyzes the anti-1,4-elimination of the C-3 phosphate and the C-6 proR hydrogen from 5-enolpyruvylshikimate-3-phosphate (EPSP) to yield chorismate, which is the branch point compound that serves as the starting substrate for the three terminal pathways of aromatic amino acid biosynthesis. This reaction introduces a second double bond into the aromatic ring system. The chain is Chorismate synthase from Pseudomonas fluorescens (strain ATCC BAA-477 / NRRL B-23932 / Pf-5).